The chain runs to 460 residues: MAEKKMWGGRFRQATAALVEEYTQSVSFDRALYAQDIAGSKAHARMLAKQGVLTADEAARIVEGLDMVLAEIEGGTFVWRRELEDVHMNIESRLTELVGDVGKKLHTGRSRNDQVALDFRLFVSDRIRAWRGLARDLVAVLAERAGEHANTLLPGCTHMQPAQPVSLGHHLLAYAWMLRRDAERLADCDRRTRVCPLGAAALAGTTYPLDPAYVAEQLDMYGTFRNSMDAVSDRDFVLESLFCGATIMAHLSRLCEEIIIWANPAFGFVRLPDAYATGSSIMPQKKNPDVAEIMRGKTGRVYGALTAMLTTVKGLPMTYNRDMQEDKEPFLDCDRTVSASLEIMAGMLRELGFNEGRMRAALRAGFLNATELADYLVGKGIPFREAHHLTGAAVALAEERAITLEELPLADLQAICDRIGDDVYAVLDPAAAVARREMPGGTGPASVAAQLAELSGWLEE.

It belongs to the lyase 1 family. Argininosuccinate lyase subfamily.

The protein resides in the cytoplasm. The enzyme catalyses 2-(N(omega)-L-arginino)succinate = fumarate + L-arginine. It participates in amino-acid biosynthesis; L-arginine biosynthesis; L-arginine from L-ornithine and carbamoyl phosphate: step 3/3. This chain is Argininosuccinate lyase, found in Nitratidesulfovibrio vulgaris (strain DSM 19637 / Miyazaki F) (Desulfovibrio vulgaris).